The sequence spans 300 residues: Ribosomal protein bS6--L-glutamate ligase (300 aa).

Residues 104 to 287 (MQLLARQGID…IAGKMIRWIE (184 aa)) form the ATP-grasp domain. Residues Lys141, 178–179 (EY), Asp187, and 211–213 (RSN) each bind ATP. Mg(2+) contacts are provided by Asp248, Glu260, and Asn262. Mn(2+) contacts are provided by Asp248, Glu260, and Asn262.

Belongs to the RimK family. Requires Mg(2+) as cofactor. It depends on Mn(2+) as a cofactor.

In terms of biological role, an L-glutamate ligase that catalyzes the ATP-dependent post-translational addition of glutamate residues to the C-terminus of ribosomal protein bS6 (RpsF). Is also able to catalyze the synthesis of poly-alpha-glutamate in vitro, via ATP hydrolysis from unprotected glutamate as substrate. The number of glutamate residues added to either RpsF or to poly-alpha-glutamate changes with pH. The chain is Ribosomal protein bS6--L-glutamate ligase from Escherichia fergusonii (strain ATCC 35469 / DSM 13698 / CCUG 18766 / IAM 14443 / JCM 21226 / LMG 7866 / NBRC 102419 / NCTC 12128 / CDC 0568-73).